We begin with the raw amino-acid sequence, 124 residues long: Large ribosomal subunit protein bL12 (124 aa).

The protein belongs to the bacterial ribosomal protein bL12 family. As to quaternary structure, homodimer. Part of the ribosomal stalk of the 50S ribosomal subunit. Forms a multimeric L10(L12)X complex, where L10 forms an elongated spine to which 2 to 4 L12 dimers bind in a sequential fashion. Binds GTP-bound translation factors.

Forms part of the ribosomal stalk which helps the ribosome interact with GTP-bound translation factors. Is thus essential for accurate translation. In Ralstonia nicotianae (strain ATCC BAA-1114 / GMI1000) (Ralstonia solanacearum), this protein is Large ribosomal subunit protein bL12.